The following is a 273-amino-acid chain: Formamidopyrimidine-DNA glycosylase (273 aa).

Catalysis depends on proline 2, which acts as the Schiff-base intermediate with DNA. Catalysis depends on glutamate 3, which acts as the Proton donor. The active-site Proton donor; for beta-elimination activity is lysine 57. DNA contacts are provided by histidine 91, arginine 110, and lysine 151. Residues 236–270 (QVYGRKDEACNDCGTIIEAKVIGQRNSYFCPHCQM) form an FPG-type zinc finger. Arginine 260 (proton donor; for delta-elimination activity) is an active-site residue.

Belongs to the FPG family. As to quaternary structure, monomer. It depends on Zn(2+) as a cofactor.

It catalyses the reaction Hydrolysis of DNA containing ring-opened 7-methylguanine residues, releasing 2,6-diamino-4-hydroxy-5-(N-methyl)formamidopyrimidine.. The catalysed reaction is 2'-deoxyribonucleotide-(2'-deoxyribose 5'-phosphate)-2'-deoxyribonucleotide-DNA = a 3'-end 2'-deoxyribonucleotide-(2,3-dehydro-2,3-deoxyribose 5'-phosphate)-DNA + a 5'-end 5'-phospho-2'-deoxyribonucleoside-DNA + H(+). In terms of biological role, involved in base excision repair of DNA damaged by oxidation or by mutagenic agents. Acts as a DNA glycosylase that recognizes and removes damaged bases. Has a preference for oxidized purines, such as 7,8-dihydro-8-oxoguanine (8-oxoG). Has AP (apurinic/apyrimidinic) lyase activity and introduces nicks in the DNA strand. Cleaves the DNA backbone by beta-delta elimination to generate a single-strand break at the site of the removed base with both 3'- and 5'-phosphates. The chain is Formamidopyrimidine-DNA glycosylase from Actinobacillus pleuropneumoniae serotype 3 (strain JL03).